Here is a 390-residue protein sequence, read N- to C-terminus: GTPase Obg (390 aa).

In terms of domain architecture, Obg spans 1–159; that stretch reads MKFVDEATIL…RELMLELLLL (159 aa). The OBG-type G domain maps to 160–333; the sequence is ADVGMLGLPN…LCWDVMNFLN (174 aa). Residues 166–173, 191–195, 213–216, 283–286, and 314–316 each bind GTP; these read GLPNAGKS, FTTLI, DIPG, NKID, and SAA. Residues Ser173 and Thr193 each coordinate Mg(2+). A compositionally biased stretch (acidic residues) spans 363–384; the sequence is EVEAEAESEDDDDWDEEDDDGV. The segment at 363-390 is disordered; sequence EVEAEAESEDDDDWDEEDDDGVEFIYER.

It belongs to the TRAFAC class OBG-HflX-like GTPase superfamily. OBG GTPase family. As to quaternary structure, monomer. Mg(2+) serves as cofactor.

The protein localises to the cytoplasm. An essential GTPase which binds GTP, GDP and possibly (p)ppGpp with moderate affinity, with high nucleotide exchange rates and a fairly low GTP hydrolysis rate. Plays a role in control of the cell cycle, stress response, ribosome biogenesis and in those bacteria that undergo differentiation, in morphogenesis control. This is GTPase Obg from Yersinia enterocolitica serotype O:8 / biotype 1B (strain NCTC 13174 / 8081).